A 160-amino-acid chain; its full sequence is Triabin (160 aa).

The first 18 residues, 1 to 18 (MKTIIAVTIFGILTCAYA), serve as a signal peptide directing secretion. Intrachain disulfides connect cysteine 24-cysteine 128, cysteine 57-cysteine 160, and cysteine 87-cysteine 102.

It belongs to the calycin superfamily. Triabin family. In terms of tissue distribution, expressed in salivary glands.

The protein resides in the secreted. Thrombin inhibitor. Forms a non-covalent complex with thrombin at a molar ratio of 1:1. Inhibits thrombin-induced platelet aggregation. Prolongs thrombin clotting time and activated partial thromboplastin time. It only minimally suppresses the amidolytic activity of thrombin. Inhibits thrombin-mediated fibrin formation in the host. Inhibits thrombin-induced endothelium-dependent relaxant and contractile responses in host blood vessels. Inhibits thrombin-induced mitogenesis in host vascular smooth muscle cells. The sequence is that of Triabin from Meccus pallidipennis (Triatomine bug).